Here is a 145-residue protein sequence, read N- to C-terminus: Aminoglycoside N(6')-acetyltransferase type 1 (145 aa).

In terms of domain architecture, N-acetyltransferase spans 1 to 145 (MDIRQMNRTH…ERVIFYRKRC (145 aa)). Substrate-binding residues include tryptophan 22, histidine 25, tyrosine 66, and glutamate 79. Acetyl-CoA-binding positions include 81–83 (IFV) and 89–94 (QRGVAK). Aspartate 115 is a substrate binding site. Asparagine 120 serves as a coordination point for acetyl-CoA. Glutamate 136 contributes to the substrate binding site.

In terms of assembly, homodimer.

It catalyses the reaction kanamycin B + acetyl-CoA = N(6')-acetylkanamycin B + CoA + H(+). Functionally, catalyzes the transfer of an acetyl group from acetyl-CoA to the 6'-amino group of aminoglycoside molecules conferring resistance to antibiotics containing the purpurosamine ring. This chain is Aminoglycoside N(6')-acetyltransferase type 1, found in Salmonella typhimurium (strain LT2 / SGSC1412 / ATCC 700720).